The sequence spans 194 residues: MSFAEKITGLLARPNQQDPIGPEQPWYLKYGSRLLGIVAAFFAILFGLWNVFSILTLNVSCLVAGIIQMVAGFVVMLLEAPCCFVCFEQVNVIADKVDSKPLYFRAGLYIAMAIPPIILCFGLASLFGSGLILGTGVVYGMMALGKKASADDMRAAAQQTFGGNTPAQTNDRAGIVNNAQPFSFTGAVGTDSNV.

3 helical membrane passes run 34-54 (LLGIVAAFFAILFGLWNVFSI), 59-79 (VSCLVAGIIQMVAGFVVMLLE), and 107-127 (GLYIAMAIPPIILCFGLASLF).

It belongs to the calcium channel flower family. In terms of assembly, homomultimer. Associates with the dally/ magu complex.

The protein localises to the cell membrane. Its subcellular location is the cytoplasmic vesicle. The protein resides in the secretory vesicle. It is found in the synaptic vesicle membrane. It localises to the presynaptic cell membrane. The protein localises to the endosome. With respect to regulation, channel activity is inhibited by La(3+), which reduces Ca(2+) influx and thus inhibits it's function in promoting activity-dependent bulk endocytosis (ADBE) in response to high stimuli. Its function is as follows. Transmembrane protein which mediates synaptic endocytosis, fitness-based cell culling, neuronal culling, morphogen gradient scaling, and calcium transport. Regulates synaptic endocytosis and hence couples exo- with endocytosis. Controls two major modes of synaptic vesicle (SV) endocytosis in the synaptic boutons of neuromuscular junctions (NMJs); Ca(2+) channel-independent Clathrin-mediated endocytosis (CME) in response to mild stimulation, and Ca(2+) channel-dependent activity-dependent bulk endocytosis (ADBE) in response to strong stimulation. Functions in ADBE and subsequent SV reformation from bulk endosomes by initiating Ca(2+) channel-dependent phosphatidylinositol 4,5-bisphosphate (PtdIns(4,5)P2) compartmentalization in synaptic boutons. There it acts at the periactive zone to provide the low Ca(2+) levels required to initiate Calcineurin activation and upregulate PtdIns(4,5)P2. Conversely PtdIns(4,5)P2 enhances fwe Ca(2+) channel-activity, establishing a positive feedback loop that induces PtdIns(4,5)P2 microdomain at the periactive zone. These microdomains trigger bulk membrane invagination (i.e. ADBE) by triggering actin polymerization while also promoting localization of fwe to bulk endosomes, thereby removing the ADBE trigger to reduce endocytosis and prevent excess membrane uptake. PtdIns(4,5)P2 then promotes SV reformation from the bulk endosomes, to coordinate ADBE and subsequent SV reformation. Different combinations of the flower isoforms at the cell membrane are also required for the identification and elimination of suboptimal or supernumerary cells during development, regeneration, and adulthood. Required for the recognition and elimination of unfit cells in the developing wing during cell competition. In the developing pupal retina, mediates the elimination of unwanted postmitotic neurons, including supernumerary photoreceptor neurons that form at the periphery of the retina and are contained within incomplete ommatidia units. Also required for efficient elimination and replacement of old neurons by newly generated neurons during regeneration in the adult brain following mechanical injury. Downstream of the flower fitness fingerprints, cells identified as unwanted or unfit are eliminated via apoptosis through the expression of ahuizotl (azot). However, the cells marked for elimination by the flower isoforms only undergo apoptosis if additional thresholds are met; (1) their neighboring fit/healthy cells express different levels of the fwe isoforms, and (2) the levels of the protective signal SPARC expressed by the loser or unwanted cells are unable to inhibit caspase activation. These additional thresholds for flower-mediated apoptosis, allows useful cells to recover from transient and limited stress before they are unnecessarily eliminated. Functions with dally and magu in a mechanism of scaling, which utilises apoptosis to ensure that the dpp morphogen gradient, which mediates organ growth, remains proportional to the size of the growing wing. In this mechanism, fwe represses dally- and Magu-dependent activity in expanding the gradient, and dally/Magu inhibits fwe-dependent apoptosis to keep cell death rate low. When the levels of these different proteins are optimally regulated the gradient correctly scales with organ growth but when this fails, fwe-mediated apoptosis is activated to trim the developing tissue to match the correct size of the gradient. The protein is Calcium channel flower of Drosophila erecta (Fruit fly).